The following is a 169-amino-acid chain: Succinate dehydrogenase cytochrome b560 subunit, mitochondrial (169 aa).

The N-terminal 29 residues, 1–29 (MAAFLLRHVSRHCLRAHLNAQLCIRNAAP), are a transit peptide targeting the mitochondrion. Topologically, residues 30–62 (LGTTAKEEMERFWKKNTSSNRPLSPHLTIYKWS) are mitochondrial matrix. The chain crosses the membrane as a helical span at residues 63 to 92 (LPMALSVCHRGSGIALSGGVSLFGLSALLL). Residues 93–112 (PGNFESYLMFVKSLCLGPTL) lie on the Mitochondrial intermembrane side of the membrane. A helical membrane pass occupies residues 113-137 (IYSAKFVLVFPLMYHSLNGIRHLLW). His127 contributes to the heme b binding site. Topologically, residues 138-144 (DLGKGLA) are mitochondrial matrix. Residues 145 to 166 (IPQVWLSGVAVVVLAVLSSGGL) form a helical membrane-spanning segment. Residues 167 to 169 (AAL) lie on the Mitochondrial intermembrane side of the membrane.

This sequence belongs to the cytochrome b560 family. In terms of assembly, component of complex II composed of four subunits: the flavoprotein (FP) SDHA, iron-sulfur protein (IP) SDHB, and a cytochrome b560 composed of SDHC and SDHD. Requires heme b as cofactor.

Its subcellular location is the mitochondrion inner membrane. It functions in the pathway carbohydrate metabolism; tricarboxylic acid cycle. Functionally, membrane-anchoring subunit of succinate dehydrogenase (SDH) that is involved in complex II of the mitochondrial electron transport chain and is responsible for transferring electrons from succinate to ubiquinone (coenzyme Q). SDH also oxidizes malate to the non-canonical enol form of oxaloacetate, enol-oxaloacetate. Enol-oxaloacetate, which is a potent inhibitor of the succinate dehydrogenase activity, is further isomerized into keto-oxaloacetate. The protein is Succinate dehydrogenase cytochrome b560 subunit, mitochondrial (Sdhc) of Mus musculus (Mouse).